A 232-amino-acid polypeptide reads, in one-letter code: SRMSDPKMIKEIIDAVSIPVMAKVRIGHVVEAQILQAIGIDYIDESEVLTPADDLFHINKKEFNVPFVCGARNLGEALRRIGEGACMIRTKGEAGTGNVIEAVRHMRTIQSQIRKLKVMPKEELMIAAKELGAPYDLVEYVRENGKLPVINFAAGGIATPADAALMMQLGCDGVFVGSGIFKSENPAKRAKAIVEAVKNYNNPLKIAEVSEGLGEAMTGLEIDKLDVTFAER.

The active-site Schiff-base intermediate with D-ribose 5-phosphate is K23. D-ribose 5-phosphate is bound at residue G95. R107 is a D-glyceraldehyde 3-phosphate binding site. D-ribose 5-phosphate contacts are provided by residues G156 and 177–178 (GS).

The protein belongs to the PdxS/SNZ family. In the presence of PdxT, forms a dodecamer of heterodimers.

The catalysed reaction is aldehydo-D-ribose 5-phosphate + D-glyceraldehyde 3-phosphate + L-glutamine = pyridoxal 5'-phosphate + L-glutamate + phosphate + 3 H2O + H(+). It functions in the pathway cofactor biosynthesis; pyridoxal 5'-phosphate biosynthesis. Functionally, catalyzes the formation of pyridoxal 5'-phosphate from ribose 5-phosphate (RBP), glyceraldehyde 3-phosphate (G3P) and ammonia. The ammonia is provided by the PdxT subunit. Can also use ribulose 5-phosphate and dihydroxyacetone phosphate as substrates, resulting from enzyme-catalyzed isomerization of RBP and G3P, respectively. This is Pyridoxal 5'-phosphate synthase subunit PdxS from Clostridium novyi.